We begin with the raw amino-acid sequence, 485 residues long: Cytochrome P450 monooxygenase tndB (485 aa).

The helical transmembrane segment at 20-40 (VYGISAVIAVGLAIYSASLAI) threads the bilayer. A heme-binding site is contributed by cysteine 481.

This sequence belongs to the cytochrome P450 family. Heme serves as cofactor.

Its subcellular location is the membrane. The protein operates within secondary metabolite biosynthesis; terpenoid biosynthesis. Functionally, cytochrome P450 monooxygenase; part of the gene cluster that mediates the biosynthesis of talaronoid C, a fusicoccane diterpenoid with an unprecedented tricyclic 5/8/6 ring system. The first step in the pathway is performed by the fusicoccadiene synthase tndC that possesses both prenyl transferase and terpene cyclase activity, converting isopentenyl diphosphate and dimethylallyl diphosphate into geranylgeranyl diphosphate (GGDP) and further converting GGDP into talarodiene, a precursor for talaronoid C. The remaining enzymes from the cluster include the cytochrome P450 monooxygenase tndB, the aldehyde reductase tndE and the alcohol dehydrogenase tndF that are involved in the conversion of talarodiene into talaronoid C. The chain is Cytochrome P450 monooxygenase tndB from Aspergillus flavipes.